The chain runs to 227 residues: MASISYLLAPLVLAAVLQPTAGAPLDAPTESPAGETSGEEAETGSPDDALAVALESVLGATKLHKNEFLVEFQGEVKYDFLDRYKIPSLPAKCPYSNFGKDACLRRLLEGLLIYSVLLKRVEEEFPSSSILSEVRFYSNILIKELENKVRDRDQVMRLTSSQEEQLLKDTDYPDTFHRKMTAHGILYNLHYFLVDCRRVINKRAKHRESAGSRVVRAVTFYHPKKRS.

An N-terminal signal peptide occupies residues 1–22 (MASISYLLAPLVLAAVLQPTAG). The interval 24–45 (PLDAPTESPAGETSGEEAETGS) is disordered. Cysteine 93 and cysteine 103 are oxidised to a cystine.

The protein belongs to the IL-6 superfamily. As to quaternary structure, component of a hexamer of two molecules each of IL6, IL6R and IL6ST; first binds to IL6R to associate with the signaling subunit IL6ST. As to expression, after induction, highly expressed in spleen. Can also be expressed in kidney after incubation with PHA.

The protein resides in the secreted. In terms of biological role, cytokine with a wide variety of biological functions in immunity, tissue regeneration, and metabolism. Binds to IL6R, then the complex associates to the signaling subunit IL6ST/gp130 to trigger the intracellular IL6-signaling pathway. The interaction with the membrane-bound IL6R and IL6ST stimulates 'classic signaling', whereas the binding of IL6 and soluble IL6R to IL6ST stimulates 'trans-signaling'. Alternatively, 'cluster signaling' occurs when membrane-bound IL6:IL6R complexes on transmitter cells activate IL6ST receptors on neighboring receiver cells. This is Interleukin-6 (il6) from Takifugu rubripes (Japanese pufferfish).